A 318-amino-acid polypeptide reads, in one-letter code: MALNRLRIGTRASQLALWQANWVKSELEKRYPGMEVELVKIKTIGDKILDVPLAQVGGKGLFVKEIEEAMLRGEIDIAVHSMKDVPTEFPEGLGLVCITEREDPRDAFISNGVTFANLPQGAKIGTSALRRQAQLLKVRPDLEMVIIRGNVETRIRKLTEDKLDAVILAAAGLKRLGFTDVVTEYLPVDLSLPAIGQGALGLECRLDDQAVRETIDFFNHPDTAHAVRAERALLWRCEGGCQVPIAAHGQVSGDSLTLTGFIASVDGTRSVKESISGPVTDCEKLGIALAEKLLADGGHEILAEVYQREVSREKEIPV.

Cysteine 241 bears the S-(dipyrrolylmethanemethyl)cysteine mark.

It belongs to the HMBS family. As to quaternary structure, monomer. Dipyrromethane is required as a cofactor.

It catalyses the reaction 4 porphobilinogen + H2O = hydroxymethylbilane + 4 NH4(+). The protein operates within porphyrin-containing compound metabolism; protoporphyrin-IX biosynthesis; coproporphyrinogen-III from 5-aminolevulinate: step 2/4. Functionally, tetrapolymerization of the monopyrrole PBG into the hydroxymethylbilane pre-uroporphyrinogen in several discrete steps. The chain is Porphobilinogen deaminase from Geobacter sulfurreducens (strain ATCC 51573 / DSM 12127 / PCA).